The chain runs to 391 residues: Ferrochelatase (391 aa).

Residues H196 and E281 each coordinate Fe cation.

The protein belongs to the ferrochelatase family.

The protein localises to the cytoplasm. The enzyme catalyses heme b + 2 H(+) = protoporphyrin IX + Fe(2+). Its pathway is porphyrin-containing compound metabolism; protoheme biosynthesis; protoheme from protoporphyrin-IX: step 1/1. Its function is as follows. Catalyzes the ferrous insertion into protoporphyrin IX. The chain is Ferrochelatase from Prochlorococcus marinus (strain MIT 9211).